The following is a 240-amino-acid chain: MEYPWLQSQVHSFSPTLHFPSFLHPLDDSKSHNINLHHMSLSHSNNTNSNNNNYQEEDRGAVVLEKKLNHNASERDRRRKLNALYSSLRALLPLSDQKRKLSIPMTVARVVKYIPEQKQELQRLSRRKEELLKRISRKTHQEQLRNKAMMDSIDSSSSQRIAANWLTDTEIAVQIATSKWTSVSDMLLRLEENGLNVISVSSSVSSTARIFYTLHLQMRGDCKVRLEELINGMLLGLRQS.

Positions 65-117 (EKKLNHNASERDRRRKLNALYSSLRALLPLSDQKRKLSIPMTVARVVKYIPEQ) constitute a bHLH domain.

Homodimer. Flowers.

The protein resides in the nucleus. The chain is Transcription factor bHLH101 (BHLH101) from Arabidopsis thaliana (Mouse-ear cress).